The primary structure comprises 548 residues: CTP synthase (548 aa).

The interval 1 to 266 (MRVNYIFVTG…DNYICKRFNL (266 aa)) is amidoligase domain. Position 14 (S14) interacts with CTP. S14 is a UTP binding site. ATP contacts are provided by residues 15–20 (SLGKGI) and D72. Residues D72 and E140 each coordinate Mg(2+). CTP is bound by residues 147-149 (DIE), 187-192 (KTKPTQ), and K223. UTP contacts are provided by residues 187–192 (KTKPTQ) and K223. The Glutamine amidotransferase type-1 domain maps to 291 to 543 (TVGMVGKYIE…IKAAIEYQHR (253 aa)). Position 353 (G353) interacts with L-glutamine. Residue C380 is the Nucleophile; for glutamine hydrolysis of the active site. Residues 381 to 384 (LGMQ), E404, and R471 each bind L-glutamine. Residues H516 and E518 contribute to the active site.

The protein belongs to the CTP synthase family. Homotetramer.

It catalyses the reaction UTP + L-glutamine + ATP + H2O = CTP + L-glutamate + ADP + phosphate + 2 H(+). It carries out the reaction L-glutamine + H2O = L-glutamate + NH4(+). The enzyme catalyses UTP + NH4(+) + ATP = CTP + ADP + phosphate + 2 H(+). It participates in pyrimidine metabolism; CTP biosynthesis via de novo pathway; CTP from UDP: step 2/2. With respect to regulation, allosterically activated by GTP, when glutamine is the substrate; GTP has no effect on the reaction when ammonia is the substrate. The allosteric effector GTP functions by stabilizing the protein conformation that binds the tetrahedral intermediate(s) formed during glutamine hydrolysis. Inhibited by the product CTP, via allosteric rather than competitive inhibition. Functionally, catalyzes the ATP-dependent amination of UTP to CTP with either L-glutamine or ammonia as the source of nitrogen. Regulates intracellular CTP levels through interactions with the four ribonucleotide triphosphates. The chain is CTP synthase from Blochmanniella pennsylvanica (strain BPEN).